Reading from the N-terminus, the 1678-residue chain is Serine/threonine-protein kinase pakD (1678 aa).

The span at 1–15 shows a compositional bias: low complexity; it reads MSRLQPQQQQRGRSS. Disordered regions lie at residues 1–73, 180–224, 262–428, and 442–489; these read MSRL…NNKF, NSNS…PNKN, QLSS…NNNN, and KRKS…SQSS. Positions 17–34 are enriched in polar residues; sequence FKDNFQIQKPLQSLTPSE. Composition is skewed to low complexity over residues 35-73 and 180-214; these read QQQQQQQQQQQQQQQQQQQQQQQQQNNANNNNNNNNNKF and NSNSSKTTTNNNNNNNNNNNNNNNNNNNNNNNNNN. In terms of domain architecture, Calponin-homology (CH) spans 82–189; sequence KNVENDIKKW…NSNSSKTTTN (108 aa). The span at 215–224 shows a compositional bias: polar residues; the sequence is RAIITSPNKN. Composition is skewed to low complexity over residues 276-359 and 399-428; these read NNNN…NINN and NNNNNNNNNNNNNNNNNNNNNNNNNNNNNN. A compositionally biased stretch (acidic residues) spans 460-472; sequence DSSDSSDSSDSDS. 2 coiled-coil regions span residues 512–542 and 570–628; these read KQDKTITSQKQTIETLEKDLEFQKQLTKKLL and TRQI…YANT. 3 stretches are compositionally biased toward low complexity: residues 631-654, 662-671, and 695-713; these read SSNSNGNNNSNNNSLGCNNSINGS, NSSTSKGTLS, and NSHQQQQQQNQLSQSQTTS. Disordered regions lie at residues 631-672 and 693-722; these read SSNS…TLSR and PVNSHQQQQQQNQLSQSQTTSPKNTSASYN. Residues 752-862 adopt a coiled-coil conformation; the sequence is VSATLQQKQQ…QNQQINNLID (111 aa). The Phorbol-ester/DAG-type zinc-finger motif lies at 1141–1197; sequence PHSFVLKSFRIISECNYCRQYIWGVRGIVAREAFECVGCKYKTHKKCLKEASEKTFC. Residues 1202 to 1215 form the CRIB domain; the sequence is VGAPFNVKHEMHVG. Disordered stretches follow at residues 1267–1292 and 1323–1346; these read LTNNSNNNNNNNNSNNNLQQQQQQNQ and NNTYNNNNNNNNNNEINPSSPNNN. A coiled-coil region spans residues 1269–1309; that stretch reads NNSNNNNNNNNSNNNLQQQQQQNQQLKQKLNITNNQQNNTI. A Protein kinase domain is found at 1376–1647; the sequence is YKVREVVGGG…AHYLLRHPFL (272 aa). ATP-binding positions include 1382–1390 and Lys-1405; that span reads VGGGSTGKV. Asp-1515 serves as the catalytic Proton acceptor.

This sequence belongs to the protein kinase superfamily. STE Ser/Thr protein kinase family. STE20 subfamily. Mg(2+) serves as cofactor.

It catalyses the reaction L-seryl-[protein] + ATP = O-phospho-L-seryl-[protein] + ADP + H(+). It carries out the reaction L-threonyl-[protein] + ATP = O-phospho-L-threonyl-[protein] + ADP + H(+). The chain is Serine/threonine-protein kinase pakD from Dictyostelium discoideum (Social amoeba).